Reading from the N-terminus, the 377-residue chain is Queuine tRNA-ribosyltransferase (377 aa).

The active-site Proton acceptor is the D89. Residues 89–93 (DSGGF), D143, Q187, and G214 each bind substrate. The RNA binding stretch occupies residues 245–251 (GVGKPED). Catalysis depends on D264, which acts as the Nucleophile. The segment at 269-273 (TRNAR) is RNA binding; important for wobble base 34 recognition. C302, C304, C307, and H333 together coordinate Zn(2+).

The protein belongs to the queuine tRNA-ribosyltransferase family. Homodimer. Within each dimer, one monomer is responsible for RNA recognition and catalysis, while the other monomer binds to the replacement base PreQ1. The cofactor is Zn(2+).

The catalysed reaction is 7-aminomethyl-7-carbaguanine + guanosine(34) in tRNA = 7-aminomethyl-7-carbaguanosine(34) in tRNA + guanine. Its pathway is tRNA modification; tRNA-queuosine biosynthesis. Functionally, catalyzes the base-exchange of a guanine (G) residue with the queuine precursor 7-aminomethyl-7-deazaguanine (PreQ1) at position 34 (anticodon wobble position) in tRNAs with GU(N) anticodons (tRNA-Asp, -Asn, -His and -Tyr). Catalysis occurs through a double-displacement mechanism. The nucleophile active site attacks the C1' of nucleotide 34 to detach the guanine base from the RNA, forming a covalent enzyme-RNA intermediate. The proton acceptor active site deprotonates the incoming PreQ1, allowing a nucleophilic attack on the C1' of the ribose to form the product. After dissociation, two additional enzymatic reactions on the tRNA convert PreQ1 to queuine (Q), resulting in the hypermodified nucleoside queuosine (7-(((4,5-cis-dihydroxy-2-cyclopenten-1-yl)amino)methyl)-7-deazaguanosine). This chain is Queuine tRNA-ribosyltransferase, found in Shewanella sediminis (strain HAW-EB3).